A 201-amino-acid chain; its full sequence is Putative Ras-related protein Rab-1C (201 aa).

GTP is bound by residues 15 to 23 (GDSGVGKSC), 33 to 40 (YTESYIST), and 63 to 67 (DTAGQ). Residues 37–45 (YISTIGVDF) carry the Effector region motif. Serine 76 is modified ((Microbial infection) O-(2-cholinephosphoryl)serine). GTP is bound by residues 121–124 (NKSD) and 151–153 (SAK). Positions 174–201 (GPGAASGGERPNLKIDSTPVKPAGGGCC) are disordered. S-geranylgeranyl cysteine attachment occurs at residues cysteine 200 and cysteine 201.

The protein belongs to the small GTPase superfamily. Rab family. In terms of processing, (Microbial infection) Phosphocholinated at Ser-76 by L.pneumophila AnkX, leading to displace GDP dissociation inhibitors (GDI). Both GDP-bound and GTP-bound forms can be phosphocholinated. Dephosphocholinated by L.pneumophila Lem3, restoring accessibility to L.pneumophila GTPase effector LepB. (Microbial infection) Glycosylated by S.typhimurium protein Ssek3: arginine GlcNAcylation prevents GTPase activity, thereby disrupting vesicular protein transport from the endoplasmic reticulum (ER) to the Golgi compartment.

The protein localises to the membrane. It is found in the cytoplasm. It catalyses the reaction GTP + H2O = GDP + phosphate + H(+). Protein transport. Probably involved in vesicular traffic. In Homo sapiens (Human), this protein is Putative Ras-related protein Rab-1C (RAB1C).